Consider the following 123-residue polypeptide: UPF0738 protein BCE_1319 (123 aa).

Belongs to the UPF0738 family.

This Bacillus cereus (strain ATCC 10987 / NRS 248) protein is UPF0738 protein BCE_1319.